We begin with the raw amino-acid sequence, 463 residues long: MTSETRTLYSQLPAIDRLLHDSAFLSLRDRYGHTQVVDLLRRMLDDARDVIRNTQTLPDWYADWAQEAKLRLENAAQSALRPVINLTGTVLHTNLGRALQAQEAVEAVTQAMRAPVTLEYDLDGAGRGHRDRALATLLCRITGAEDACIVNNNAAAVLLMLAATASGKEVVVSRGELVEIGGAFRIPDVMRQAGCTLHEVGTTNRTHAKDYRQAVNENTGLLMKVHTSNYSIEGFTKTVEEAELAEIGRELDIPVVADLGSGSLVDLSQYGLPKEPMPQQLIAAGVSLVSFSGDKLLGGPQAGIIVGKKAMIAQLQSHPLKRALRADKMTLAALEATLRLYLHPEALAEKLPTLRLLTRSEASIREQAQRLQARLAARYGDEFALEVKPCLSQIGSGSLPVDRLPSAAMTFTPHDGRGSRLEALAARWRMLPVPVIGRIYDGRLWLDMRCLEDESRFMEMMLK.

Lysine 295 bears the N6-(pyridoxal phosphate)lysine mark.

It belongs to the SelA family. As to quaternary structure, homodecamer; pentamer of dimers. Binds only one seryl-tRNA(Sec) per dimer. Pyridoxal 5'-phosphate serves as cofactor.

It is found in the cytoplasm. It catalyses the reaction L-seryl-tRNA(Sec) + selenophosphate + H(+) = L-selenocysteinyl-tRNA(Sec) + phosphate. The protein operates within aminoacyl-tRNA biosynthesis; selenocysteinyl-tRNA(Sec) biosynthesis; selenocysteinyl-tRNA(Sec) from L-seryl-tRNA(Sec) (bacterial route): step 1/1. Its function is as follows. Converts seryl-tRNA(Sec) to selenocysteinyl-tRNA(Sec) required for selenoprotein biosynthesis. The polypeptide is L-seryl-tRNA(Sec) selenium transferase (Salmonella enteritidis PT4 (strain P125109)).